Consider the following 466-residue polypeptide: MTNPLWGGRFTTSSNDIMKKINESISFDQALYEEDILTSIAHCKMLVNQKIISKYEGQLIIHGLEVIQKQIESGNFEFSTDLEDIHMNIEYSLKKMIGNIAGKLHTARSRNDQIATDLKLWIRKSIKKLEQQLHKLQSTLLNIAENHYDTIMPGFTHLQIAQPVTLGHHLMAYFEMLKRDRSRWQDLYKRMNQCPAGSAALAGTSFPIDRHFIAQELGFDSPTENSIDAVSDRDYIIEFLSNASICIMHLSRLAEEIILWCSYNFKFITLSDNITTGSSIMPQKKNPDAAELIRGKTGRIFSSLNHILIVMKGLPLAYSKDMQEDKEPLFDAERNLILCIEAMNSMLNNITINSENMLKAAEHDYSTATDLADWLVKHINLSFRESHEITGQIVKLAEHNKCKIHELTLIQLQKIIPSITEDVFSVLSAKNSVTSRTSYGGTAPINVLQAIKNGRIYLENTDSLTQ.

It belongs to the lyase 1 family. Argininosuccinate lyase subfamily.

The protein resides in the cytoplasm. It catalyses the reaction 2-(N(omega)-L-arginino)succinate = fumarate + L-arginine. It participates in amino-acid biosynthesis; L-arginine biosynthesis; L-arginine from L-ornithine and carbamoyl phosphate: step 3/3. This is Argininosuccinate lyase from Ehrlichia ruminantium (strain Gardel).